Reading from the N-terminus, the 420-residue chain is Tol-Pal system protein TolB (420 aa).

The signal sequence occupies residues 1–21 (MKLFVHLVLFISLFIPYFTKA).

Belongs to the TolB family. As to quaternary structure, the Tol-Pal system is composed of five core proteins: the inner membrane proteins TolA, TolQ and TolR, the periplasmic protein TolB and the outer membrane protein Pal. They form a network linking the inner and outer membranes and the peptidoglycan layer.

Its subcellular location is the periplasm. Functionally, part of the Tol-Pal system, which plays a role in outer membrane invagination during cell division and is important for maintaining outer membrane integrity. The chain is Tol-Pal system protein TolB from Wolbachia sp. subsp. Drosophila simulans (strain wRi).